The sequence spans 440 residues: 3-phosphoshikimate 1-carboxyvinyltransferase (440 aa).

3-phosphoshikimate contacts are provided by Lys28, Ser29, and Arg33. Position 28 (Lys28) interacts with phosphoenolpyruvate. Residues Gly98 and Arg126 each coordinate phosphoenolpyruvate. 3-phosphoshikimate-binding residues include Ser171, Gln173, Asp318, and Lys345. A phosphoenolpyruvate-binding site is contributed by Gln173. The active-site Proton acceptor is Asp318. Phosphoenolpyruvate is bound by residues Arg349 and Arg391.

The protein belongs to the EPSP synthase family. Monomer.

It is found in the cytoplasm. It catalyses the reaction 3-phosphoshikimate + phosphoenolpyruvate = 5-O-(1-carboxyvinyl)-3-phosphoshikimate + phosphate. It functions in the pathway metabolic intermediate biosynthesis; chorismate biosynthesis; chorismate from D-erythrose 4-phosphate and phosphoenolpyruvate: step 6/7. In terms of biological role, catalyzes the transfer of the enolpyruvyl moiety of phosphoenolpyruvate (PEP) to the 5-hydroxyl of shikimate-3-phosphate (S3P) to produce enolpyruvyl shikimate-3-phosphate and inorganic phosphate. This chain is 3-phosphoshikimate 1-carboxyvinyltransferase, found in Anaeromyxobacter dehalogenans (strain 2CP-C).